Here is a 414-residue protein sequence, read N- to C-terminus: Esterase FrsA (414 aa).

This sequence belongs to the FrsA family.

It carries out the reaction a carboxylic ester + H2O = an alcohol + a carboxylate + H(+). Its function is as follows. Catalyzes the hydrolysis of esters. The chain is Esterase FrsA from Shigella flexneri serotype 5b (strain 8401).